A 319-amino-acid chain; its full sequence is Dehydrogenase/reductase SDR family member 9 (319 aa).

The N-terminal stretch at 1 to 17 (MLFWVLGLLILCGFLWT) is a signal peptide. NAD(+) is bound by residues 34 to 58 (ITGC…HVIA) and aspartate 83. Position 164 (serine 164) interacts with substrate. Tyrosine 176 functions as the Proton acceptor in the catalytic mechanism. Position 180 (lysine 180) interacts with NAD(+).

The protein belongs to the short-chain dehydrogenases/reductases (SDR) family. In terms of assembly, homotetramer. As to expression, highly expressed in trachea and epidermis. Detected at lower levels in spinal cord, bone marrow, brain, tongue, esophagus, heart, colon, testis, placenta, lung, skeletal muscle and lymph node.

It is found in the microsome membrane. The protein localises to the endoplasmic reticulum membrane. The enzyme catalyses 3beta-hydroxy-5alpha-pregnane-20-one + NAD(+) = 5alpha-pregnane-3,20-dione + NADH + H(+). It catalyses the reaction 17beta-hydroxy-5alpha-androstan-3-one + NAD(+) = 5alpha-androstan-3,17-dione + NADH + H(+). It carries out the reaction androsterone + NAD(+) = 5alpha-androstan-3,17-dione + NADH + H(+). The catalysed reaction is 5alpha-androstane-3alpha,17beta-diol + NAD(+) = 17beta-hydroxy-5alpha-androstan-3-one + NADH + H(+). The enzyme catalyses all-trans-retinol + NAD(+) = all-trans-retinal + NADH + H(+). It catalyses the reaction 3alpha-hydroxy-5alpha-pregnan-20-one + NAD(+) = 5alpha-pregnane-3,20-dione + NADH + H(+). In terms of biological role, 3-alpha-hydroxysteroid dehydrogenase that converts 3-alpha-tetrahydroprogesterone (allopregnanolone) to dihydroxyprogesterone and 3-alpha-androstanediol to dihydroxyprogesterone. Also plays a role in the biosynthesis of retinoic acid from retinaldehyde. Can utilize both NADH and NADPH. The chain is Dehydrogenase/reductase SDR family member 9 (DHRS9) from Homo sapiens (Human).